The chain runs to 238 residues: Probable tetraspanin tspC (238 aa).

The Cytoplasmic segment spans residues 1–16 (MVNTRDFLPKTTHYLK). A helical membrane pass occupies residues 17–37 (VPIIGLNAILWLLGLVLIVVG). The Extracellular portion of the chain corresponds to 38–69 (SVCISFFSNFKEFTKESGYKNALSNLTTSAPT). A glycan (N-linked (GlcNAc...) asparagine) is linked at Asn62. A helical membrane pass occupies residues 70–90 (GVLVIGIFFILLTLVGCFVAY). Residues 91 to 93 (KEK) are Cytoplasmic-facing. The helical transmembrane segment at 94 to 114 (LVGLVLYTMLMLILLVVLIGI) threads the bilayer. The Extracellular portion of the chain corresponds to 115–197 (GGKALTLDKE…GIFTKQVSSK (83 aa)). Asn143 and Asn164 each carry an N-linked (GlcNAc...) asparagine glycan. A helical membrane pass occupies residues 198–218 (LVLVGIAGVVIGCIEFVAMAL). Topologically, residues 219–238 (SLFLIIRICRSPRSRAYDQY) are cytoplasmic.

This sequence belongs to the tetraspanin (TM4SF) family.

Its subcellular location is the membrane. This chain is Probable tetraspanin tspC (tspC), found in Dictyostelium discoideum (Social amoeba).